The following is a 722-amino-acid chain: D-(-)-3-hydroxybutyrate oligomer hydrolase (722 aa).

Residues 1 to 25 (MKTMQGKGSGRRLRGALLVTMAASG) form the signal peptide. The active-site Charge relay system is the S319.

Belongs to the D-(-)-3-hydroxybutyrate oligomer hydrolase family.

The protein resides in the secreted. The enzyme catalyses (3R)-hydroxybutanoate dimer + H2O = 2 (R)-3-hydroxybutanoate + H(+). The protein operates within lipid metabolism; butanoate metabolism. Its activity is regulated as follows. Inhibited by diisopropylfluorophosphate (DFP). Its function is as follows. Participates in the degradation of poly-3-hydroxybutyrate (PHB). It works downstream of poly(3-hydroxybutyrate) depolymerase, hydrolyzing D(-)-3-hydroxybutyrate oligomers of various length (3HB-oligomers) into 3HB-monomers. This Ralstonia pickettii (Burkholderia pickettii) protein is D-(-)-3-hydroxybutyrate oligomer hydrolase.